Reading from the N-terminus, the 98-residue chain is Co-chaperonin GroES (98 aa).

The protein belongs to the GroES chaperonin family. In terms of assembly, heptamer of 7 subunits arranged in a ring. Interacts with the chaperonin GroEL.

The protein resides in the cytoplasm. Its function is as follows. Together with the chaperonin GroEL, plays an essential role in assisting protein folding. The GroEL-GroES system forms a nano-cage that allows encapsulation of the non-native substrate proteins and provides a physical environment optimized to promote and accelerate protein folding. GroES binds to the apical surface of the GroEL ring, thereby capping the opening of the GroEL channel. This chain is Co-chaperonin GroES, found in Corynebacterium diphtheriae (strain ATCC 700971 / NCTC 13129 / Biotype gravis).